The following is a 114-amino-acid chain: uncharacterized protein (114 aa).

The N-terminal stretch at methionine 1 to alanine 19 is a signal peptide. Serine 41 bears the Phosphoserine mark.

This sequence belongs to the protease inhibitor I9 family.

This is an uncharacterized protein from Saccharomyces cerevisiae (strain ATCC 204508 / S288c) (Baker's yeast).